The following is a 450-amino-acid chain: UDP-N-acetylmuramoylalanine--D-glutamate ligase (450 aa).

118 to 124 (GSNAKST) is an ATP binding site.

It belongs to the MurCDEF family.

Its subcellular location is the cytoplasm. The catalysed reaction is UDP-N-acetyl-alpha-D-muramoyl-L-alanine + D-glutamate + ATP = UDP-N-acetyl-alpha-D-muramoyl-L-alanyl-D-glutamate + ADP + phosphate + H(+). Its pathway is cell wall biogenesis; peptidoglycan biosynthesis. Its function is as follows. Cell wall formation. Catalyzes the addition of glutamate to the nucleotide precursor UDP-N-acetylmuramoyl-L-alanine (UMA). This is UDP-N-acetylmuramoylalanine--D-glutamate ligase from Pseudomonas putida (strain ATCC 47054 / DSM 6125 / CFBP 8728 / NCIMB 11950 / KT2440).